A 336-amino-acid polypeptide reads, in one-letter code: Fructose-1,6-bisphosphatase class 1 (336 aa).

Mg(2+)-binding residues include E90, D112, L114, and D115. Substrate is bound by residues 115-118, N211, and K277; that span reads DGSS. Position 283 (E283) interacts with Mg(2+).

Belongs to the FBPase class 1 family. Homotetramer. It depends on Mg(2+) as a cofactor.

The protein localises to the cytoplasm. The catalysed reaction is beta-D-fructose 1,6-bisphosphate + H2O = beta-D-fructose 6-phosphate + phosphate. The protein operates within carbohydrate biosynthesis; gluconeogenesis. The chain is Fructose-1,6-bisphosphatase class 1 from Pseudomonas savastanoi pv. phaseolicola (strain 1448A / Race 6) (Pseudomonas syringae pv. phaseolicola (strain 1448A / Race 6)).